The following is a 511-amino-acid chain: V-type proton ATPase subunit B (511 aa).

ATP is bound at residue R381. Residues 484-511 form a disordered region; it reads FYGRDREQDDDEEEEEDPDKSGDKLIDA. Residues 491–501 are compositionally biased toward acidic residues; sequence QDDDEEEEEDP. The segment covering 502–511 has biased composition (basic and acidic residues); sequence DKSGDKLIDA.

It belongs to the ATPase alpha/beta chains family. In terms of assembly, V-ATPase is a heteromultimeric enzyme composed of a peripheral catalytic V1 complex (components A to H) attached to an integral membrane V0 proton pore complex (components: a, c, c', c'', d, e, f and VOA1).

The protein localises to the vacuole membrane. Functionally, non-catalytic subunit of the V1 complex of vacuolar(H+)-ATPase (V-ATPase), a multisubunit enzyme composed of a peripheral complex (V1) that hydrolyzes ATP and a membrane integral complex (V0) that translocates protons. V-ATPase is responsible for acidifying and maintaining the pH of intracellular compartments. This Candida tropicalis (Yeast) protein is V-type proton ATPase subunit B (VMA2).